Reading from the N-terminus, the 71-residue chain is Brevinin-1HN1 (71 aa).

The signal sequence occupies residues 1–22 (MFTSKKPLLLLFFLGTINLSLC). Positions 23–45 (EQERDADEEERRDDPDERDVEVE) are excised as a propeptide. A disulfide bridge connects residues Cys65 and Cys71.

Expressed by the skin glands.

It localises to the secreted. Its function is as follows. Has antimicrobial activity against Gram-positive bacteria and fungi but has weak or no activity against a range of Gram-negative bacteria except P.faecalis. Active against the Gram-positive bacteria E.faecium 091299 (MIC=19 uM), E.faecalis 981 (MIC=19 uM), S.aureus ATCC 25923 (MIC=1.2 uM), S.carnosus KHS (MIC=4.8 uM), B.licheniformis X39 (MIC=2.4 uM) and R.rhodochrous X15 (MIC=1.2 uM). Active against the Gram-negative bacterium P.faecalis X29 (MIC=4.8 uM), is virtually inactive against E.coli ATCC 25922 (MIC=150 uM) and inactive against P.aeruginosa and S.typhi. Has antifungal activity against C.albicans ATCC 2002 (MIC=2.4 uM) and is also active against the slime mold 090223 (MIC=1.2 uM). Has low hemolytic activity against human erythrocytes (LC(50)=75 uM). This chain is Brevinin-1HN1, found in Odorrana hainanensis (Odor frog).